An 857-amino-acid polypeptide reads, in one-letter code: DNA mismatch repair protein MutS (857 aa).

613-620 (GPNMGGKS) is an ATP binding site. The disordered stretch occupies residues 797-820 (TSLPHEQPAAHKAKDAPQVPHQSD).

This sequence belongs to the DNA mismatch repair MutS family.

Functionally, this protein is involved in the repair of mismatches in DNA. It is possible that it carries out the mismatch recognition step. This protein has a weak ATPase activity. The protein is DNA mismatch repair protein MutS of Pseudomonas putida (strain ATCC 47054 / DSM 6125 / CFBP 8728 / NCIMB 11950 / KT2440).